A 434-amino-acid chain; its full sequence is Carboxy-terminal-processing protease (434 aa).

An N-terminal signal peptide occupies residues 1–23 (MIRKVIFFVAGVFLSASLIVMAQ). The 81-residue stretch at 86-166 (DMRDSTKGEF…TPITLTINRF (81 aa)) folds into the PDZ domain. Residues S294, D305, and K319 each act as charge relay system in the active site. Positions 383 to 392 (HIKGKQESDK) are enriched in basic and acidic residues. Positions 383–406 (HIKGKQESDKGSGSAAFVPRDPKD) are disordered.

The protein belongs to the peptidase S41A family. In terms of processing, may undergo autocatalytic processing at the C-terminus (398-434 or 425-434 missing).

It localises to the secreted. It carries out the reaction The enzyme shows specific recognition of a C-terminal tripeptide, Xaa-Yaa-Zaa, in which Xaa is preferably Ala or Leu, Yaa is preferably Ala or Tyr, and Zaa is preferably Ala, but then cleaves at a variable distance from the C-terminus. A typical cleavage is -Ala-Ala-|-Arg-Ala-Ala-Lys-Glu-Asn-Tyr-Ala-Leu-Ala-Ala.. Involved in protection of the bacterium from thermal and osmotic stresses. The polypeptide is Carboxy-terminal-processing protease (ctpA) (Bartonella bacilliformis (strain ATCC 35685 / KC583 / Herrer 020/F12,63)).